Here is a 1589-residue protein sequence, read N- to C-terminus: Polyhomeotic-proximal chromatin protein (1589 aa).

A compositionally biased stretch (basic and acidic residues) spans 1-15 (MDRRALKFMQKRADT). Disordered stretches follow at residues 1–85 (MDRR…GGKQ), 107–174 (KYDV…NCNS), 252–290 (LQQQ…STAI), 1112–1244 (LSTA…STTT), and 1260–1294 (AVST…NGSK). 3 stretches are compositionally biased toward low complexity: residues 18–28 (DTTTPVSTTAS), 60–80 (NHNN…QQQQ), and 119–139 (AQQQ…VTPT). The span at 154-174 (HTPSTPNRPSAPSTPNTNCNS) shows a compositional bias: polar residues. Over residues 260–271 (NGGGAASAGAGG) the composition is skewed to gly residues. Residues 272–285 (AASPANSQQSQQQQ) are compositionally biased toward low complexity. Ser-1145 bears the Phosphoserine mark. Thr-1148 is modified (phosphothreonine). The span at 1157-1180 (TTPKSSTPATVSASVEASSSTGEA) shows a compositional bias: low complexity. Residues 1189-1221 (RSSTPSKGATTPTSKQSNAAVQPPSSTTPNSVS) are compositionally biased toward polar residues. Composition is skewed to low complexity over residues 1230–1244 (TCGS…STTT) and 1260–1290 (AVST…SSIS). An FCS-type zinc finger spans residues 1356 to 1389 (SAPGSDMVACEQCGKMEHKAKLKRKRYCSPGCSR). Zn(2+) is bound by residues Cys-1365, Cys-1368, Cys-1383, and Cys-1387. The 65-residue stretch at 1513-1577 (WSVDDVSNFI…VAKVESIKEV (65 aa)) folds into the SAM domain.

In terms of assembly, component of PRC1 complex, which contains many PcG proteins like Pc, ph, Scm, Psc, Sce and also chromatin-remodeling proteins such as histone deacetylases. This complex is distinct from the Esc/E(z) complex, at least composed of esc, E(z), Su(z)12, HDAC1/Rpd3 and Caf1-55. The 2 complexes however cooperate and interact together during the first 3 hours of development to establish PcG silencing. Interacts with the SAM domain of Scm via its SAM domain in vitro. Interacts with Trl in vivo and with corto in vitro. Salivary glands.

The protein localises to the nucleus. Its function is as follows. Polycomb group (PcG) protein. PcG proteins act by forming multiprotein complexes, which are required to maintain the transcriptionally repressive state of homeotic genes throughout development. PcG proteins are not required to initiate repression, but to maintain it during later stages of development. Component of the PcG multiprotein PRC1 complex, a complex that acts via chromatin remodeling and modification of histones; it mediates monoubiquitination of histone H2A 'Lys-118', rendering chromatin heritably changed in its expressibility. Plays a role in regulating the expression of other pair-rule genes such as eve, ftz, and H. This chain is Polyhomeotic-proximal chromatin protein (ph-p), found in Drosophila melanogaster (Fruit fly).